A 52-amino-acid chain; its full sequence is Ornatin-C (52 aa).

The Cell attachment site signature appears at 42–44; sequence RGD.

The protein belongs to the ornatin family.

The protein resides in the secreted. In terms of biological role, potent inhibitor of fibrinogen interaction with platelet receptors expressed on glycoprotein IIb-IIIa complex. May prevent blood from clotting during either feeding and/or storage of ingested blood. The chain is Ornatin-C from Placobdella ornata (Turtle leech).